The following is a 288-amino-acid chain: Oxaloacetate decarboxylase (288 aa).

S47 contributes to the substrate binding site. Residue D85 coordinates Mg(2+). Residues R156 and H232 each contribute to the substrate site.

The protein belongs to the isocitrate lyase/PEP mutase superfamily. Oxaloacetate decarboxylase family. As to quaternary structure, homotetramer; dimer of dimers. Requires Mg(2+) as cofactor.

It catalyses the reaction oxaloacetate + H(+) = pyruvate + CO2. Catalyzes the decarboxylation of oxaloacetate into pyruvate. Seems to play a role in maintaining cellular concentrations of bicarbonate and pyruvate. This chain is Oxaloacetate decarboxylase, found in Bradyrhizobium diazoefficiens (strain JCM 10833 / BCRC 13528 / IAM 13628 / NBRC 14792 / USDA 110).